We begin with the raw amino-acid sequence, 314 residues long: NF-kappa-B inhibitor alpha (314 aa).

The interval 1 to 41 (MFQPAEPGQEWAMEGPRDALKKERLLDDRHDSGLDSMKDEE) is disordered. Over residues 15–41 (GPRDALKKERLLDDRHDSGLDSMKDEE) the composition is skewed to basic and acidic residues. Residue K21 forms a Glycyl lysine isopeptide (Lys-Gly) (interchain with G-Cter in SUMO); alternate linkage. Residue K21 forms a Glycyl lysine isopeptide (Lys-Gly) (interchain with G-Cter in ubiquitin); alternate linkage. K22 is covalently cross-linked (Glycyl lysine isopeptide (Lys-Gly) (interchain with G-Cter in ubiquitin)). A Destruction motif motif is present at residues 30–36 (HDSGLDS). At S32 the chain carries Phosphoserine; by IKKA and IKKB. The residue at position 36 (S36) is a Phosphoserine; by IKKA, IKKB, IKKE and TBK1. Y42 carries the post-translational modification Phosphotyrosine; by Tyr-kinases. The Nuclear export signal signature appears at 45-54 (MVKELREIRL). Residues 110-120 (LQQTPLHLAVI) carry the Nuclear import signal motif. 4 ANK repeats span residues 110-139 (LQQT…DPEL), 143-172 (RGNT…TQHL), 182-211 (NGHT…DVNA), and 216-245 (NGRT…DVNR). (3S)-3-hydroxyasparagine; by HIF1AN is present on residues N210 and N244. Residues S283 and S288 each carry the phosphoserine; by CK2 modification. T291 is modified (phosphothreonine; by CK2). Residue S293 is modified to Phosphoserine; by CK2. Residue T296 is modified to Phosphothreonine.

It belongs to the NF-kappa-B inhibitor family. In terms of assembly, interacts with RELA; the interaction requires the nuclear import signal. Part of a 70-90 kDa complex at least consisting of CHUK, IKBKB, NFKBIA, RELA, ELP1 and MAP3K14. Interacts with NKIRAS1 and NKIRAS2. Interacts with RWDD3; the interaction enhances sumoylation. Interacts with PRMT2. Interacts with PRKACA in platelets; this interaction is disrupted by thrombin and collagen. Interacts with MEFV. Interacts with DDRGK1; positively regulates NFKBIA phosphorylation and degradation. Interacts with HNRNPA2B1; the interaction may be mediated by the RRM2 domain of HNRNPA2B1, and HNRNPA2B1 may interact simultaneously with FAM76B and either NFKBIA or NFKBIE to form a complex. Post-translationally, phosphorylated at Ser-32 and Ser-36 by IKKA/CHUK and IKKB/IKBKB; disables inhibition of NF-kappa-B DNA-binding activity. Phosphorylation at positions 32 and 36 is prerequisite to recognition by the SCF(FBXW11) and SCF(BTRC) complexes, leading to polyubiquitination and subsequent degradation. In terms of processing, polyubiquitinated at Lys-21 and/or Lys-22 following phosphorylation at Ser-32 and Ser-36. Monoubiquitinated at Lys-21 and/or Lys-22 by UBE2D3. Ubiquitin chain elongation is then performed by CDC34 in cooperation with the SCF(FBXW11) E3 ligase complex, building ubiquitin chains from the UBE2D3-primed NFKBIA-linked ubiquitin. The resulting polyubiquitination leads to protein degradation. Also ubiquitinated by the SCF(BTRC) complex following stimulus-dependent phosphorylation at Ser-32 and Ser-36. Deubiquitinated by USP38, leading to NF-kappa-B inhibition. Sumoylated; sumoylation requires the presence of the nuclear import signal. Sumoylation blocks ubiquitination and proteasome-mediated degradation of the protein thereby increasing the protein stability. Post-translationally, hydroxylated by HIF1AN.

It is found in the cytoplasm. Its subcellular location is the nucleus. Functionally, inhibits the activity of dimeric NF-kappa-B/REL complexes by trapping REL (RELA/p65 and NFKB1/p50) dimers in the cytoplasm by masking their nuclear localization signals. On cellular stimulation by immune and pro-inflammatory responses, becomes phosphorylated promoting ubiquitination and degradation, enabling the dimeric RELA to translocate to the nucleus and activate transcription. The chain is NF-kappa-B inhibitor alpha (NFKBIA) from Sus scrofa (Pig).